A 667-amino-acid chain; its full sequence is MTDITANVVVSNPRPIFTESRSFKAVANGKIYIGQIDTDPVNPANQIPVYIENEDGSHVQITQPLIINAAGKIVYNGQLVKIVTVQGHSMAIYDANGSQVDYIANVLKYDPDQYSIEADKKFKYSVKLSDYPTLQDAASAAVDGLLIDRDYNFYGGETVDFGGKVLTIECKAKFIGDGNLIFTKLGKGSRIAGVFMESTTTPWVIKPWTDDNQWLTDAAAVVATLKQSKTDGYQPTVSDYVKFPGIETLLPPNAKGQNITSTLEIRECIGVEVHRASGLMAGFLFRGCHFCKMVDANNPSGGKDGIITFENLSGDWGKGNYVIGGRTSYGSVSSAQFLRNNGGFERDGGVIGFTSYRAGESGVKTWQGTVGSTTSRNYNLQFRDSVVIYPVWDGFDLGADTDMNPELDRPGDYPITQYPLHQLPLNHLIDNLLVRGALGVGFGMDGKGMYVSNITVEDCAGSGAYLLTHESVFTNIAIIDTNTKDFQANQIYISGACRVNGLRLIGIRSTDGQGLTIDAPNSTVSGITGMVDPSRINVANLAEEGLGNIRANSFGYDSAAIKLRIHKLSKTLDSGALYSHINGGAGSGSAYTQLTAISGSTPDAVSLKVNHKDCRGAEIPFVPDIASDDFIKDSSCFLPYWENNSTSLKALVKKPNGELVRLTLATL.

Catalysis depends on residues Glu-360, Asp-393, and Asp-396.

This sequence belongs to the P22likevirus tail fiber protein family. In terms of assembly, homotrimer. Interacts with the host O-antigen lipopolysaccharides; this interaction induces cleavage of host O-antigen. Interacts with tail hub protein gp10; this interaction anchors 6 fibers onto the tail hub hexamer.

The protein localises to the virion. Structural component of the short non-contractile tail. The tail comprises six spikes that mediate primary attachment to the host cell lipopolysaccharides (LPS) and display endorhamnosidase enzymatic activity, hydrolyzing the alpha-1,3-O-glycosidic linkage between rhamnose and galactose of the O-antigen polysaccharide. Digestion of the LPS brings the capsid near the cell outer membrane. The sequence is that of Tail spike protein (9) from Salmonella phage P22 (Bacteriophage P22).